Consider the following 196-residue polypeptide: Protein TEX261 (196 aa).

A run of 5 helical transmembrane segments spans residues 3-23 (FMYLLSWLSLFIQVAFITLAV), 42-62 (SRIIKYMIWFSTAVLIGLYVF), 70-90 (IGVGLFTNLVYFGLLQTFPFI), 97-117 (FILSCGLVVVNHYLACQFFAE), and 125-145 (VLAYFTFCLWIIPFAFFVSLS).

The protein belongs to the SVP26 family.

The protein resides in the membrane. This chain is Protein TEX261 (TEX261), found in Pongo abelii (Sumatran orangutan).